Here is a 114-residue protein sequence, read N- to C-terminus: Large ribosomal subunit protein bL19 (114 aa).

Belongs to the bacterial ribosomal protein bL19 family.

This protein is located at the 30S-50S ribosomal subunit interface and may play a role in the structure and function of the aminoacyl-tRNA binding site. This is Large ribosomal subunit protein bL19 from Thermoanaerobacter sp. (strain X514).